We begin with the raw amino-acid sequence, 213 residues long: Redox-sensing transcriptional repressor Rex (213 aa).

The H-T-H motif DNA-binding region spans 18 to 57 (LYYRFVNTLKSKGIDRVNSKAISEGLNIDSATIRRDFSYF). An NAD(+)-binding site is contributed by 92 to 97 (GVGNLG).

The protein belongs to the transcriptional regulatory Rex family. As to quaternary structure, homodimer.

The protein resides in the cytoplasm. In terms of biological role, modulates transcription in response to changes in cellular NADH/NAD(+) redox state. The protein is Redox-sensing transcriptional repressor Rex of Staphylococcus saprophyticus subsp. saprophyticus (strain ATCC 15305 / DSM 20229 / NCIMB 8711 / NCTC 7292 / S-41).